We begin with the raw amino-acid sequence, 99 residues long: NADH-quinone oxidoreductase subunit K (99 aa).

3 helical membrane-spanning segments follow: residues 3–23 (PANY…GVLL), 28–48 (IVMF…FVTF), and 59–79 (MIAF…LAII).

Belongs to the complex I subunit 4L family. NDH-1 is composed of 14 different subunits. Subunits NuoA, H, J, K, L, M, N constitute the membrane sector of the complex.

It localises to the cell membrane. It catalyses the reaction a quinone + NADH + 5 H(+)(in) = a quinol + NAD(+) + 4 H(+)(out). Its function is as follows. NDH-1 shuttles electrons from NADH, via FMN and iron-sulfur (Fe-S) centers, to quinones in the respiratory chain. The immediate electron acceptor for the enzyme in this species is believed to be a menaquinone. Couples the redox reaction to proton translocation (for every two electrons transferred, four hydrogen ions are translocated across the cytoplasmic membrane), and thus conserves the redox energy in a proton gradient. This is NADH-quinone oxidoreductase subunit K from Mycobacterium bovis (strain ATCC BAA-935 / AF2122/97).